The primary structure comprises 348 residues: Probable dual-specificity RNA methyltransferase RlmN (348 aa).

Glu93 acts as the Proton acceptor in catalysis. The Radical SAM core domain maps to 99–323 (TEKRLTACLS…QTRLSNSGIN (225 aa)). Residues Cys106 and Cys338 are joined by a disulfide bond. Residues Cys113, Cys117, and Cys120 each contribute to the [4Fe-4S] cluster site. S-adenosyl-L-methionine-binding positions include 160-161 (GE), Ser190, 219-221 (SLH), and Asn295. The active-site S-methylcysteine intermediate is Cys338.

This sequence belongs to the radical SAM superfamily. RlmN family. The cofactor is [4Fe-4S] cluster.

The protein resides in the cytoplasm. The catalysed reaction is adenosine(2503) in 23S rRNA + 2 reduced [2Fe-2S]-[ferredoxin] + 2 S-adenosyl-L-methionine = 2-methyladenosine(2503) in 23S rRNA + 5'-deoxyadenosine + L-methionine + 2 oxidized [2Fe-2S]-[ferredoxin] + S-adenosyl-L-homocysteine. It catalyses the reaction adenosine(37) in tRNA + 2 reduced [2Fe-2S]-[ferredoxin] + 2 S-adenosyl-L-methionine = 2-methyladenosine(37) in tRNA + 5'-deoxyadenosine + L-methionine + 2 oxidized [2Fe-2S]-[ferredoxin] + S-adenosyl-L-homocysteine. Its function is as follows. Specifically methylates position 2 of adenine 2503 in 23S rRNA and position 2 of adenine 37 in tRNAs. This Prochlorococcus marinus subsp. pastoris (strain CCMP1986 / NIES-2087 / MED4) protein is Probable dual-specificity RNA methyltransferase RlmN.